Here is a 304-residue protein sequence, read N- to C-terminus: Putative S-adenosyl-L-methionine-dependent methyltransferase MAV_1058 (304 aa).

S-adenosyl-L-methionine-binding positions include Asp128 and 157-158 (DL).

It belongs to the UPF0677 family.

Functionally, exhibits S-adenosyl-L-methionine-dependent methyltransferase activity. The sequence is that of Putative S-adenosyl-L-methionine-dependent methyltransferase MAV_1058 from Mycobacterium avium (strain 104).